The chain runs to 168 residues: Transcription antitermination protein NusB (168 aa).

Belongs to the NusB family.

In terms of biological role, involved in transcription antitermination. Required for transcription of ribosomal RNA (rRNA) genes. Binds specifically to the boxA antiterminator sequence of the ribosomal RNA (rrn) operons. The protein is Transcription antitermination protein NusB of Chlamydia trachomatis serovar L2 (strain ATCC VR-902B / DSM 19102 / 434/Bu).